The primary structure comprises 93 residues: Small ribosomal subunit protein uS19 (93 aa).

This sequence belongs to the universal ribosomal protein uS19 family.

In terms of biological role, protein S19 forms a complex with S13 that binds strongly to the 16S ribosomal RNA. The protein is Small ribosomal subunit protein uS19 of Thermoanaerobacter pseudethanolicus (strain ATCC 33223 / 39E) (Clostridium thermohydrosulfuricum).